We begin with the raw amino-acid sequence, 293 residues long: Acetylglutamate kinase (293 aa).

Residues 66–67 (GG), R88, and N190 contribute to the substrate site.

The protein belongs to the acetylglutamate kinase family. ArgB subfamily.

The protein localises to the cytoplasm. The enzyme catalyses N-acetyl-L-glutamate + ATP = N-acetyl-L-glutamyl 5-phosphate + ADP. It participates in amino-acid biosynthesis; L-arginine biosynthesis; N(2)-acetyl-L-ornithine from L-glutamate: step 2/4. In terms of biological role, catalyzes the ATP-dependent phosphorylation of N-acetyl-L-glutamate. The chain is Acetylglutamate kinase from Thiobacillus denitrificans (strain ATCC 25259 / T1).